Here is a 1164-residue protein sequence, read N- to C-terminus: DNA-directed RNA polymerase 132 kDa polypeptide (1164 aa).

This sequence belongs to the RNA polymerase beta chain family. As to quaternary structure, the DNA-dependent RNA polymerase used for intermediate and late genes expression consists of eight subunits (147) kDa, (133) kDa, (35) kDa, (30) kDa, (22) kDa, (19) kDa, (18) kDa and (7) kDa totalling more than 500 kDa in mass. The same holoenzyme, with the addition of the transcription-specificity factor RAP94, is used for early gene expression.

It is found in the virion. It catalyses the reaction RNA(n) + a ribonucleoside 5'-triphosphate = RNA(n+1) + diphosphate. Part of the DNA-dependent RNA polymerase which catalyzes the transcription of viral DNA into RNA using the four ribonucleoside triphosphates as substrates. Responsible for the transcription of early, intermediate and late genes. DNA-dependent RNA polymerase associates with the early transcription factor (ETF), itself composed of D6 and A7, thereby allowing the early genes transcription. Late transcription, and probably also intermediate transcription, require newly synthesized RNA polymerase. The sequence is that of DNA-directed RNA polymerase 132 kDa polypeptide (RPO132) from Mus musculus (Mouse).